A 327-amino-acid chain; its full sequence is MSLTSDIKQELAQVHVAKNSVRAAEVSAILRFAGEMQAVGGKLVIEANLDSMQVGMRLQEFIQGLYNSRVDVHTVNPTVSRKTPRYLVRIIDNADEIARRTGLVTRSGHVVKGLAPSVVSGTISDAEAAWRGAFLANGSLSDPGRSSSLEVLCPGQESALALVGCARRIGIAAKTKDSRGFDRVNVRDAEAIGALLTRMGAQKTRIMWEEKRLKRESRTPANRLANFDDANLRRSARAAVAAAARVERAMKILGDDVPEHLAEAGQLRVQHRQASLEELGRLADPQMTKDAVAGRIRRLLTMADKRAEDLKIPDTNSVVTEDLLEEI.

The segment at residues 275–308 (SLEELGRLADPQMTKDAVAGRIRRLLTMADKRAE) is a DNA-binding region (H-T-H motif).

It belongs to the WhiA family.

In terms of biological role, involved in cell division and chromosome segregation. This chain is Probable cell division protein WhiA, found in Corynebacterium glutamicum (strain R).